The sequence spans 236 residues: Small ribosomal subunit protein uS2c (236 aa).

Belongs to the universal ribosomal protein uS2 family.

It is found in the plastid. Its subcellular location is the chloroplast. This is Small ribosomal subunit protein uS2c (rps2) from Crucihimalaya wallichii (Rock-cress).